Consider the following 132-residue polypeptide: Agouti-signaling protein (132 aa).

The first 22 residues, 1 to 22 (MDVTRLLLATLLVFLCFFTVYS), serve as a signal peptide directing secretion. Asn-39 carries N-linked (GlcNAc...) asparagine glycosylation. Residues 62–88 (ISRKEAEKKRSSKKEASMKKVAQPRTP) are disordered. The segment covering 63–79 (SRKEAEKKRSSKKEASM) has biased composition (basic and acidic residues). 5 disulfides stabilise this stretch: Cys-93–Cys-108, Cys-100–Cys-114, Cys-107–Cys-125, Cys-111–Cys-132, and Cys-116–Cys-123. The Agouti domain occupies 93–132 (CVATRYSCKPPAPACCDPCASCQCRFFRSACSCRVLRLNC).

The protein localises to the secreted. In terms of biological role, involved in the regulation of melanogenesis. The binding of ASP to MC1R precludes alpha-MSH initiated signaling and thus blocks production of cAMP, leading to a down-regulation of eumelanogenesis (brown/black pigment) and thus increasing synthesis of pheomelanin (yellow/red pigment). The polypeptide is Agouti-signaling protein (ASIP) (Semnopithecus entellus (Northern plains gray langur)).